The following is an 82-amino-acid chain: Alpha-defensin 17 (82 aa).

An N-terminal signal peptide occupies residues Leu1–Ala8. The tract at residues Leu1–Leu43 is disordered. A propeptide spanning residues Asp9 to Ser47 is cleaved from the precursor. 3 disulfides stabilise this stretch: Cys53/Cys81, Cys55/Cys70, and Cys60/Cys80.

Belongs to the alpha-defensin family.

It localises to the secreted. Its function is as follows. Probably contributes to the antimicrobial barrier function of the small bowel mucosa. The chain is Alpha-defensin 17 (Defa17) from Mus musculus (Mouse).